Consider the following 128-residue polypeptide: Aspartate 1-decarboxylase (128 aa).

The active-site Schiff-base intermediate with substrate; via pyruvic acid is the Ser25. Residue Ser25 is modified to Pyruvic acid (Ser). Thr57 contacts substrate. The active-site Proton donor is Tyr58. 73–75 (GSA) lines the substrate pocket.

Belongs to the PanD family. In terms of assembly, heterooctamer of four alpha and four beta subunits. The cofactor is pyruvate. Post-translationally, is synthesized initially as an inactive proenzyme, which is activated by self-cleavage at a specific serine bond to produce a beta-subunit with a hydroxyl group at its C-terminus and an alpha-subunit with a pyruvoyl group at its N-terminus.

The protein resides in the cytoplasm. The catalysed reaction is L-aspartate + H(+) = beta-alanine + CO2. The protein operates within cofactor biosynthesis; (R)-pantothenate biosynthesis; beta-alanine from L-aspartate: step 1/1. Its function is as follows. Catalyzes the pyruvoyl-dependent decarboxylation of aspartate to produce beta-alanine. The protein is Aspartate 1-decarboxylase of Burkholderia thailandensis (strain ATCC 700388 / DSM 13276 / CCUG 48851 / CIP 106301 / E264).